A 281-amino-acid chain; its full sequence is MEANTRSTGRLPAAFLTPGSSSFMDFLSDHQPELLPGKRQLPPTQGVIEAPHGTTIVAVTFPGGVVLAGDRRATMGNMIAQRDIEKVFPADEYSAVGIAGTAGLAVEMVKLFQLELEHFEKVEGAQLSLEGKANRLSTMIRSNLGMAMQGLAVVPLFAGYDVDRNRGRIFSYDVTGGRSEESGYAATGSGSIFARGAMKKLFRADLSEADATTLVVQALYDAADDDSATGGPDVARRIYPIVTVITEDGFRRLTDEESSEIARSILERRLEQPDGPRAALL.

The propeptide at 1-53 is removed in mature form; by autocatalysis; sequence MEANTRSTGRLPAAFLTPGSSSFMDFLSDHQPELLPGKRQLPPTQGVIEAPHG. Catalysis depends on Thr-54, which acts as the Nucleophile.

It belongs to the peptidase T1B family. As to quaternary structure, the 20S proteasome core is composed of 14 alpha and 14 beta subunits that assemble into four stacked heptameric rings, resulting in a barrel-shaped structure. The two inner rings, each composed of seven catalytic beta subunits, are sandwiched by two outer rings, each composed of seven alpha subunits. The catalytic chamber with the active sites is on the inside of the barrel. Has a gated structure, the ends of the cylinder being occluded by the N-termini of the alpha-subunits. Is capped by the proteasome-associated ATPase, ARC.

Its subcellular location is the cytoplasm. It carries out the reaction Cleavage of peptide bonds with very broad specificity.. It functions in the pathway protein degradation; proteasomal Pup-dependent pathway. The formation of the proteasomal ATPase ARC-20S proteasome complex, likely via the docking of the C-termini of ARC into the intersubunit pockets in the alpha-rings, may trigger opening of the gate for substrate entry. Interconversion between the open-gate and close-gate conformations leads to a dynamic regulation of the 20S proteasome proteolysis activity. In terms of biological role, component of the proteasome core, a large protease complex with broad specificity involved in protein degradation. The sequence is that of Proteasome subunit beta from Streptomyces scabiei (strain 87.22).